We begin with the raw amino-acid sequence, 1217 residues long: Endonuclease YhcR (1217 aa).

A signal peptide spans 1-46 (MLSVEMISRQNRCHYVYKGGNMMRRILHIVLITALMFLNVMYTFEA). Positions 376-517 (GEYEGIVDRV…KKDQKGIWNE (142 aa)) constitute a TNase-like domain. Residues Arg-404, Glu-412, and Arg-460 contribute to the active site. The tract at residues 590-828 (LRILSMNDLH…VIFAAHNHQV (239 aa)) is phosphoesterase. Residues Asp-597, His-599, Asp-647, Asn-680, His-792, and His-824 each coordinate a divalent metal cation. The interval 829–1085 (VNGEVNGKLI…AYTKEGRIKL (257 aa)) is 5'-nucleotidase. Residues Phe-965 and 1035–1042 (FMATATGA) contribute to the substrate site. Residues 1087 to 1142 (EASDIEDPVTEDPITEEPGDDPGTEDPIKEDPRPGEDLPDIKETPGTAPVHQLPPS) form a disordered region. Residues 1089–1110 (SDIEDPVTEDPITEEPGDDPGT) are compositionally biased toward acidic residues. The segment covering 1112–1129 (DPIKEDPRPGEDLPDIKE) has biased composition (basic and acidic residues). An LPXTG sorting signal motif is present at residues 1182–1186 (LPDTS). Position 1185 is a pentaglycyl murein peptidoglycan amidated threonine (Thr-1185). Positions 1186-1217 (SAGYYNFMVIGAAVTLSGTYLYVRRKRSASRT) are cleaved as a propeptide — removed by sortase.

This sequence in the C-terminal section; belongs to the 5'-nucleotidase family. Ca(2+) serves as cofactor. Mn(2+) is required as a cofactor.

The protein resides in the secreted. The protein localises to the cell wall. With respect to regulation, requires a minimum of 0.1 mM of calcium for a significant activity. Maximal activity was observed with concentrations of calcium between 1 to 5 mM. Is 10-fold less active with the corresponding concentrations of manganese. Inhibited by NaCl at concentrations of 100 mM and higher. Its function is as follows. Sugar-nonspecific endonuclease that yields nucleotide 3'-monophosphate products. No 5'-nucleotidase activity was detected, using 5'-AMP as the substrate, in the presence of diverse divalent metals and with various pH values. This is Endonuclease YhcR (yhcR) from Bacillus subtilis (strain 168).